The following is a 145-amino-acid chain: Superoxide dismutase [Mn/Fe] (145 aa).

The Fe(3+) site is built by His10 and His64. The Mn(2+) site is built by His10 and His64.

This sequence belongs to the iron/manganese superoxide dismutase family. Requires Mn(2+) as cofactor. Fe(3+) is required as a cofactor.

The enzyme catalyses 2 superoxide + 2 H(+) = H2O2 + O2. Destroys superoxide anion radicals which are normally produced within the cells and which are toxic to biological systems. Catalyzes the dismutation of superoxide anion radicals into O2 and H2O2 by successive reduction and oxidation of the transition metal ion at the active site. This Streptococcus parasanguinis protein is Superoxide dismutase [Mn/Fe] (sodA).